The following is a 517-amino-acid chain: Glucose-6-phosphate isomerase (517 aa).

Glutamate 345 functions as the Proton donor in the catalytic mechanism. Residues histidine 376 and lysine 490 contribute to the active site.

Belongs to the GPI family.

It localises to the cytoplasm. The enzyme catalyses alpha-D-glucose 6-phosphate = beta-D-fructose 6-phosphate. It functions in the pathway carbohydrate biosynthesis; gluconeogenesis. The protein operates within carbohydrate degradation; glycolysis; D-glyceraldehyde 3-phosphate and glycerone phosphate from D-glucose: step 2/4. Its function is as follows. Catalyzes the reversible isomerization of glucose-6-phosphate to fructose-6-phosphate. This Erythrobacter litoralis (strain HTCC2594) protein is Glucose-6-phosphate isomerase.